The primary structure comprises 352 residues: Chorismate synthase (352 aa).

An NADP(+)-binding site is contributed by arginine 48. FMN is bound by residues 125–127 (RSS), 238–239 (NA), glycine 278, 293–297 (KPTSS), and arginine 319.

It belongs to the chorismate synthase family. In terms of assembly, homotetramer. It depends on FMNH2 as a cofactor.

The catalysed reaction is 5-O-(1-carboxyvinyl)-3-phosphoshikimate = chorismate + phosphate. Its pathway is metabolic intermediate biosynthesis; chorismate biosynthesis; chorismate from D-erythrose 4-phosphate and phosphoenolpyruvate: step 7/7. Catalyzes the anti-1,4-elimination of the C-3 phosphate and the C-6 proR hydrogen from 5-enolpyruvylshikimate-3-phosphate (EPSP) to yield chorismate, which is the branch point compound that serves as the starting substrate for the three terminal pathways of aromatic amino acid biosynthesis. This reaction introduces a second double bond into the aromatic ring system. The protein is Chorismate synthase of Legionella pneumophila (strain Paris).